The primary structure comprises 485 residues: Trk system potassium uptake protein TrkH (485 aa).

Residues methionine 1 to glutamine 2 are Cytoplasmic-facing. A helical transmembrane segment spans residues phenylalanine 3–leucine 29. The Periplasmic portion of the chain corresponds to leucine 30–alanine 35. A helical transmembrane segment spans residues glycine 36–asparagine 57. Residues arginine 58–lysine 65 lie on the Cytoplasmic side of the membrane. Residues serine 66–isoleucine 90 traverse the membrane as a helical segment. Residues valine 98–leucine 109 constitute an intramembrane region (helical; Pore-forming). An intramembrane segment occupies threonine 110–threonine 115. A selectivity filter part 1 region spans residues threonine 110–threonine 115. K(+) is bound by residues threonine 111 and threonine 112. Over valine 116–proline 124 the chain is Periplasmic. The chain crosses the membrane as a helical span at residues lysine 125 to leucine 150. Over proline 151–arginine 177 the chain is Cytoplasmic. A helical transmembrane segment spans residues isoleucine 178 to leucine 202. Residues alanine 203 to methionine 205 lie on the Periplasmic side of the membrane. Threonine 206 is an intramembrane region. Positions proline 207 to isoleucine 218 form an intramembrane region, helical; Pore-forming. The stretch at alanine 219–serine 224 is an intramembrane region. The selectivity filter part 2 stretch occupies residues alanine 219–serine 224. K(+) contacts are provided by isoleucine 220 and glycine 221. Topologically, residues threonine 225–aspartate 234 are periplasmic. Positions serine 235–alanine 250 form an intramembrane region, helical. A helical membrane pass occupies residues phenylalanine 276–lysine 296. An intramembrane region (helical; Pore-forming) is located at residues proline 303–serine 318. Residues threonine 319–threonine 324 lie within the membrane without spanning it. Positions threonine 319–threonine 324 are selectivity filter part 3. Residues threonine 320 and alanine 321 each coordinate K(+). The Periplasmic segment spans residues threonine 325–proline 332. The helical intramembrane region spans leucine 333 to phenylalanine 344. Positions isoleucine 345–lysine 357 form an intramembrane region, note=Loop between two helices. Residues proline 392 to alanine 419 traverse the membrane as a helical segment. Topologically, residues threonine 420–glycine 421 are periplasmic. An intramembrane segment occupies methionine 422 to aspartate 423. Positions glutamate 424–threonine 434 form an intramembrane region, helical; Pore-forming. The stretch at leucine 435–glycine 441 is an intramembrane region. The interval asparagine 436–glycine 441 is selectivity filter part 4. The K(+) site is built by asparagine 437 and leucine 438. Topologically, residues leucine 442–asparagine 453 are periplasmic. Residues aspartate 454–leucine 465 constitute an intramembrane region (helical).

It belongs to the TrkH potassium transport family. As to quaternary structure, homodimer.

The protein resides in the cell inner membrane. Functionally, low-affinity potassium transport system. Interacts with trk system potassium uptake protein TrkA and requires TrkE for transport activity. Selective for permeation of potassium ion and rubidium ion over smaller ions such as natrium or litium. The polypeptide is Trk system potassium uptake protein TrkH (Vibrio parahaemolyticus serotype O3:K6 (strain RIMD 2210633)).